The chain runs to 422 residues: Histidine--tRNA ligase (422 aa).

The protein belongs to the class-II aminoacyl-tRNA synthetase family. In terms of assembly, homodimer.

Its subcellular location is the cytoplasm. The catalysed reaction is tRNA(His) + L-histidine + ATP = L-histidyl-tRNA(His) + AMP + diphosphate + H(+). The polypeptide is Histidine--tRNA ligase (Vibrio campbellii (strain ATCC BAA-1116)).